The following is a 306-amino-acid chain: tRNA (guanine-N(1)-)-methyltransferase (306 aa).

S-adenosyl-L-methionine is bound by residues G157 and 182–187 (IGDYVL).

It belongs to the RNA methyltransferase TrmD family. In terms of assembly, homodimer.

The protein localises to the cytoplasm. It catalyses the reaction guanosine(37) in tRNA + S-adenosyl-L-methionine = N(1)-methylguanosine(37) in tRNA + S-adenosyl-L-homocysteine + H(+). Functionally, specifically methylates guanosine-37 in various tRNAs. This Bifidobacterium adolescentis (strain ATCC 15703 / DSM 20083 / NCTC 11814 / E194a) protein is tRNA (guanine-N(1)-)-methyltransferase.